A 302-amino-acid chain; its full sequence is UDP-N-acetylenolpyruvoylglucosamine reductase (302 aa).

The FAD-binding PCMH-type domain occupies 31–196; it reads KIGGPADVLA…LRAWISLERG (166 aa). Arg175 is an active-site residue. Residue Ser225 is the Proton donor of the active site. The active site involves Glu295.

The protein belongs to the MurB family. Requires FAD as cofactor.

Its subcellular location is the cytoplasm. The catalysed reaction is UDP-N-acetyl-alpha-D-muramate + NADP(+) = UDP-N-acetyl-3-O-(1-carboxyvinyl)-alpha-D-glucosamine + NADPH + H(+). It participates in cell wall biogenesis; peptidoglycan biosynthesis. Cell wall formation. This chain is UDP-N-acetylenolpyruvoylglucosamine reductase, found in Caldanaerobacter subterraneus subsp. tengcongensis (strain DSM 15242 / JCM 11007 / NBRC 100824 / MB4) (Thermoanaerobacter tengcongensis).